Reading from the N-terminus, the 595-residue chain is Probable L-gulonolactone oxidase 1 (595 aa).

Positions 1-18 are cleaved as a signal peptide; sequence MAFWLSLIFFCFCTFASS. Residues 47-229 form the FAD-binding PCMH-type domain; sequence SICEAAKVEY…SQVTFQLQPM (183 aa).

It belongs to the oxygen-dependent FAD-linked oxidoreductase family. FAD is required as a cofactor.

It catalyses the reaction L-gulono-1,4-lactone + O2 = L-ascorbate + H2O2 + H(+). Its pathway is cofactor biosynthesis; L-ascorbate biosynthesis. May be involved in the biosynthesis of ascorbic acid. The chain is Probable L-gulonolactone oxidase 1 from Arabidopsis thaliana (Mouse-ear cress).